A 185-amino-acid polypeptide reads, in one-letter code: Lysozyme g (185 aa).

Glutamine 1 carries the post-translational modification Pyrrolidone carboxylic acid. Disulfide bonds link cysteine 4/cysteine 60 and cysteine 18/cysteine 29. Active-site residues include glutamate 73 and aspartate 86.

Belongs to the glycosyl hydrolase 23 family.

It localises to the secreted. The catalysed reaction is Hydrolysis of (1-&gt;4)-beta-linkages between N-acetylmuramic acid and N-acetyl-D-glucosamine residues in a peptidoglycan and between N-acetyl-D-glucosamine residues in chitodextrins.. The protein is Lysozyme g of Casuarius casuarius (Southern cassowary).